The sequence spans 120 residues: MTTTPTDRKYAASHEWLTQDGTVGISDHAQEQLGDVVYVELPEVGREVKAGEAVAVVESVKTASDIYAPASGTITAVNDELSGSPEKVNESPYEGGWLFKLDVTEEGDLLDAAAYEAQAN.

Residues 20–102 (DGTVGISDHA…YEGGWLFKLD (83 aa)) enclose the Lipoyl-binding domain. An N6-lipoyllysine modification is found at lysine 61.

The protein belongs to the GcvH family. The glycine cleavage system is composed of four proteins: P, T, L and H. It depends on (R)-lipoate as a cofactor.

Functionally, the glycine cleavage system catalyzes the degradation of glycine. The H protein shuttles the methylamine group of glycine from the P protein to the T protein. The sequence is that of Glycine cleavage system H protein from Deinococcus radiodurans (strain ATCC 13939 / DSM 20539 / JCM 16871 / CCUG 27074 / LMG 4051 / NBRC 15346 / NCIMB 9279 / VKM B-1422 / R1).